The primary structure comprises 31 residues: Morintide mO3 (31 aa).

A Chitin-binding type-1 domain is found at Asn-1–Gly-30. 2 disulfide bridges follow: Cys-4–Cys-18 and Cys-24–Cys-28.

As to expression, seeds (at protein level).

Its function is as follows. Chitin-binding protein which functions in defense against chitin-containing fungal pathogens. The chain is Morintide mO3 from Moringa oleifera (Horseradish tree).